We begin with the raw amino-acid sequence, 538 residues long: MEARRSGNFESSIWDDDYIQSLTSSYTGKMYVDKSEKLKIEVKMMMDEATDELEQLELINDLQRLGISYHFKDGIAKMLNNIYKSDSKYMEKDLHLTALKFRLLRQHGYRVPQDVFSSFMDDEGNFEAWVVEDVSVLVSLYEASHISVEGESILDMAKDFSSHHLTEMVEQIGEACLAEQVKRTLELPLHWRVGRLEARWFVQAYETRPNSNPTLVELAKLDFNMVQAKYQDELKRCSRWYEETGLPEKMSFARHRLAECFLWSLGFIPDPHHGYSREIMTKIAVLITITDDIYDIYGALEELQEFTEAFERWDINSLDLLPEYMQICFLAIFNSANELGYQILRDQGLNIIPNLKRSWAELSRAYYLEARWFHNGFVPTTDQYLNTAWISISGPLLLSYGYLTTTNPINNKELKSLEKHPSIIRWPSMVLRLADDLGTSSEEIKRGDVSKSIQCYMNETGCCEGDARHHVKSLIEVALKRMNDEILMEKPFKSFDTNAMNLARISLCFYQYGDGFGKPHSDTIKNLVSLIVLPFHMP.

Positions 291, 295, 435, 439, and 443 each coordinate Mg(2+). Residues 291–295 carry the DDXXD motif motif; sequence DDIYD.

The protein belongs to the terpene synthase family. The cofactor is Mg(2+). Mn(2+) is required as a cofactor.

It catalyses the reaction (2E,6E)-farnesyl diphosphate = (1S,5S,6R)-alpha-bergamotene + diphosphate. Catalyzes a mixture of sesquiterpenoids from (2E,6E)-farnesyl diphosphate. Catalyzes the formation of exo-alpha-bergamotene, as well as (E)-nerolidol, (Z)-alpha-bisabolene, (E)-beta-farnesene and beta-sesquiphellandrene. Also has activity towards geranyl diphosphate, but to a much lesser extent. The polypeptide is Exo-alpha-bergamotene synthase (Lavandula angustifolia (Lavender)).